Reading from the N-terminus, the 355-residue chain is Protein-glutamate methylesterase/protein-glutamine glutaminase 3 (355 aa).

A Response regulatory domain is found at 8-126 (RVLVVDDSPT…AEELRRWGKE (119 aa)). At Asp59 the chain carries 4-aspartylphosphate. Residues 152-337 (PPTGARVDIF…LASMPELILQ (186 aa)) enclose the CheB-type methylesterase domain. Active-site residues include Ser166, His193, and Asp284.

This sequence belongs to the CheB family. Post-translationally, phosphorylated by CheA. Phosphorylation of the N-terminal regulatory domain activates the methylesterase activity.

It localises to the cytoplasm. It catalyses the reaction [protein]-L-glutamate 5-O-methyl ester + H2O = L-glutamyl-[protein] + methanol + H(+). It carries out the reaction L-glutaminyl-[protein] + H2O = L-glutamyl-[protein] + NH4(+). Involved in chemotaxis. Part of a chemotaxis signal transduction system that modulates chemotaxis in response to various stimuli. Catalyzes the demethylation of specific methylglutamate residues introduced into the chemoreceptors (methyl-accepting chemotaxis proteins or MCP) by CheR. Also mediates the irreversible deamidation of specific glutamine residues to glutamic acid. The polypeptide is Protein-glutamate methylesterase/protein-glutamine glutaminase 3 (Myxococcus xanthus (strain DK1622)).